Consider the following 291-residue polypeptide: 4-hydroxy-tetrahydrodipicolinate synthase (291 aa).

Thr45 is a pyruvate binding site. Residue Tyr131 is the Proton donor/acceptor of the active site. Residue Lys159 is the Schiff-base intermediate with substrate of the active site. Residue Ile202 participates in pyruvate binding.

The protein belongs to the DapA family. As to quaternary structure, homotetramer; dimer of dimers.

It is found in the cytoplasm. The enzyme catalyses L-aspartate 4-semialdehyde + pyruvate = (2S,4S)-4-hydroxy-2,3,4,5-tetrahydrodipicolinate + H2O + H(+). It functions in the pathway amino-acid biosynthesis; L-lysine biosynthesis via DAP pathway; (S)-tetrahydrodipicolinate from L-aspartate: step 3/4. In terms of biological role, catalyzes the condensation of (S)-aspartate-beta-semialdehyde [(S)-ASA] and pyruvate to 4-hydroxy-tetrahydrodipicolinate (HTPA). The sequence is that of 4-hydroxy-tetrahydrodipicolinate synthase from Methanosarcina acetivorans (strain ATCC 35395 / DSM 2834 / JCM 12185 / C2A).